A 493-amino-acid polypeptide reads, in one-letter code: Cytochrome P450 2E1 (493 aa).

298–303 (FAGTET) is a substrate binding site. Residue Cys-437 participates in heme binding.

Belongs to the cytochrome P450 family. In terms of assembly, interacts with chaperones HSP70 and HSP90; this interaction is required for initial targeting to mitochondria. Heme is required as a cofactor.

It localises to the endoplasmic reticulum membrane. It is found in the microsome membrane. The protein localises to the mitochondrion inner membrane. It carries out the reaction an organic molecule + reduced [NADPH--hemoprotein reductase] + O2 = an alcohol + oxidized [NADPH--hemoprotein reductase] + H2O + H(+). The catalysed reaction is (5Z,8Z,11Z)-eicosatrienoate + reduced [NADPH--hemoprotein reductase] + O2 = 19-hydroxy-(5Z,8Z,11Z)-eicosatrienoate + oxidized [NADPH--hemoprotein reductase] + H2O + H(+). It catalyses the reaction (5Z,8Z,11Z,14Z,17Z)-eicosapentaenoate + reduced [NADPH--hemoprotein reductase] + O2 = 19-hydroxy-(5Z,8Z,11Z,14Z,17Z)-eicosapentaenoate + oxidized [NADPH--hemoprotein reductase] + H2O + H(+). The enzyme catalyses (4Z,7Z,10Z,13Z,16Z,19Z)-docosahexaenoate + reduced [NADPH--hemoprotein reductase] + O2 = 21-hydroxy-(4Z,7Z,10Z,13Z,16Z,19Z)-docosahexaenoate + oxidized [NADPH--hemoprotein reductase] + H2O + H(+). It carries out the reaction dodecanoate + reduced [NADPH--hemoprotein reductase] + O2 = 11-hydroxydodecanoate + oxidized [NADPH--hemoprotein reductase] + H2O + H(+). The catalysed reaction is tetradecanoate + reduced [NADPH--hemoprotein reductase] + O2 = 13-hydroxytetradecanoate + oxidized [NADPH--hemoprotein reductase] + H2O + H(+). It catalyses the reaction 4-nitrophenol + NADPH + O2 + H(+) = 4-nitrocatechol + NADP(+) + H2O. Its pathway is lipid metabolism; fatty acid metabolism. The omega-1 hydroxylase activity is stimulated by cytochrome b5. Its function is as follows. A cytochrome P450 monooxygenase involved in the metabolism of fatty acids. Mechanistically, uses molecular oxygen inserting one oxygen atom into a substrate, and reducing the second into a water molecule, with two electrons provided by NADPH via cytochrome P450 reductase (NADPH--hemoprotein reductase). Catalyzes the hydroxylation of carbon-hydrogen bonds. Hydroxylates fatty acids specifically at the omega-1 position displaying the highest catalytic activity for saturated fatty acids. May be involved in the oxidative metabolism of xenobiotics. The sequence is that of Cytochrome P450 2E1 from Homo sapiens (Human).